The sequence spans 993 residues: Desmoglein-3 (993 aa).

A signal peptide spans 1–23; sequence MTWLLFRTSGALAILMVLILVHG. The propeptide occupies 24–48; sequence ELRIETKGQHGEDETAIQGRRRYKR. 4 Cadherin domains span residues 48-156, 157-266, 267-386, and 383-494; these read REWV…APVF, SQSI…FPMF, KESQ…HPAS, and HPAS…CPTV. At 49–617 the chain is on the extracellular side; that stretch reads EWVKFAKPCR…GKRPSGRLGS (569 aa). 2 N-linked (GlcNAc...) asparagine glycosylation sites follow: Asn-109 and Asn-179. Asn-458 and Asn-544 each carry an N-linked (GlcNAc...) asparagine glycan. Residues 618–638 traverse the membrane as a helical segment; that stretch reads AAIGLLLLGLLLLLLAPLLLL. Residues 639 to 993 are Cytoplasmic-facing; sequence TCDYGVGPIG…CTEDPCSRLI (355 aa). The segment at 641-713 is required for interaction with CTNND1 and localization at cell-cell junctions; the sequence is DYGVGPIGGV…NTYAGGTVVE (73 aa). Desmoglein repeat repeat units follow at residues 903-929 and 930-960; these read LSAS…MVTE and TYSA…ERVI.

Homodimer. Part of a complex that contains DSG3, PKP1, YAP1 and YWHAG; the complex is required for localization of DSG3 and YAP1 to the cell membrane in keratinocytes. Interacts with PKP2. Interacts with CTNND1; the interaction facilitates DSG3 localization and retention at cell-cell junctions. Interacts with CDH1; the interaction is required for CDH1 localization to developing adherens junctions. Interacts with RAC1; the interaction is required for DSG3 translocation to cell-cell junctions, organization of cortical F-actin bundles and actin anchoring at cell-cell junctions. Interacts with DSC3; the interaction may limit the interaction of DSC3 with p38MAPK family members and therefore repress p38MAPK signaling activation.

It is found in the cell membrane. It localises to the cell junction. Its subcellular location is the desmosome. The protein resides in the cytoplasm. The protein localises to the tight junction. In terms of biological role, a component of desmosome cell-cell junctions which are required for positive regulation of cellular adhesion. Required for adherens and desmosome junction assembly in response to mechanical force in keratinocytes. Required for desmosome-mediated cell-cell adhesion of cells surrounding the telogen hair club and the basal layer of the outer root sheath epithelium, consequently is essential for the anchoring of telogen hairs in the hair follicle. Required for the maintenance of the epithelial barrier via promoting desmosome-mediated intercellular attachment of suprabasal epithelium to basal cells. May play a role in the protein stability of the desmosome plaque components DSP, JUP, PKP1, PKP2 and PKP3. Required for YAP1 localization at the plasma membrane in keratinocytes in response to mechanical strain, via the formation of an interaction complex composed of DSG3, PKP1 and YWHAG. May also be involved in the positive regulation of YAP1 target gene transcription and as a result cell proliferation. Positively regulates cellular contractility and cell junction formation via organization of cortical F-actin bundles and anchoring of actin to tight junctions, in conjunction with RAC1. The cytoplasmic pool of DSG3 is required for the localization of CDH1 and CTNNB1 at developing adherens junctions, potentially via modulation of SRC activity. Inhibits keratinocyte migration via suppression of p38MAPK signaling, may therefore play a role in moderating wound healing. This is Desmoglein-3 (DSG3) from Canis lupus familiaris (Dog).